Here is a 162-residue protein sequence, read N- to C-terminus: Allophycocyanin alpha-B chain (162 aa).

Asparagine 71 carries the N4-methylasparagine modification. Cysteine 81 provides a ligand contact to (2R,3E)-phycocyanobilin.

It belongs to the phycobiliprotein family. Contains one covalently linked phycocyanobilin chromophore.

Its subcellular location is the plastid. It localises to the cyanelle thylakoid membrane. Allophycocyanin is a photosynthetic bile pigment-protein complex with maximum absorption at approximately 650 nanometers. This chain is Allophycocyanin alpha-B chain (apcD), found in Cyanophora paradoxa.